Here is a 264-residue protein sequence, read N- to C-terminus: Octanoyltransferase (264 aa).

The region spanning 74 to 262 (GTASELVWLV…AFESVFGPRQ (189 aa)) is the BPL/LPL catalytic domain. Substrate is bound by residues 113–120 (RGGEYTYH), 193–195 (AIG), and 206–208 (GIA). Residue Cys224 is the Acyl-thioester intermediate of the active site.

This sequence belongs to the LipB family.

The protein localises to the cytoplasm. It catalyses the reaction octanoyl-[ACP] + L-lysyl-[protein] = N(6)-octanoyl-L-lysyl-[protein] + holo-[ACP] + H(+). Its pathway is protein modification; protein lipoylation via endogenous pathway; protein N(6)-(lipoyl)lysine from octanoyl-[acyl-carrier-protein]: step 1/2. Catalyzes the transfer of endogenously produced octanoic acid from octanoyl-acyl-carrier-protein onto the lipoyl domains of lipoate-dependent enzymes. Lipoyl-ACP can also act as a substrate although octanoyl-ACP is likely to be the physiological substrate. In Brucella melitensis biotype 1 (strain ATCC 23456 / CCUG 17765 / NCTC 10094 / 16M), this protein is Octanoyltransferase.